We begin with the raw amino-acid sequence, 77 residues long: Putative neurotoxin 1 (77 aa).

The signal sequence occupies residues 1–25 (MKAFIVILSIAIVLLLIVSIKETSA). A propeptide spanning residues 26-46 (KDCKQECVKRYTKGDLTNFLK) is cleaved from the precursor.

It belongs to the scolopendra neurotoxin 3 family. In terms of processing, contains 2 disulfide bonds. Expressed by the venom gland.

Its subcellular location is the secreted. This Scolopendra subspinipes (Vietnamese centipede) protein is Putative neurotoxin 1.